A 532-amino-acid chain; its full sequence is [Pyruvate dehydrogenase [acetyl-transferring]]-phosphatase 2, mitochondrial (532 aa).

The transit peptide at 1 to 69 (MSSTVSYWIF…FALRKAYRHT (69 aa)) directs the protein to the mitochondrion. The region spanning 107 to 518 (NSVLRFESNQ…YRDDITVMVV (412 aa)) is the PPM-type phosphatase domain. Aspartate 144, glycine 145, aspartate 415, and aspartate 511 together coordinate Mn(2+).

This sequence belongs to the PP2C family. Mg(2+) is required as a cofactor.

It is found in the mitochondrion. The enzyme catalyses O-phospho-L-seryl-[pyruvate dehydrogenase E1 alpha subunit] + H2O = L-seryl-[pyruvate dehydrogenase E1 alpha subunit] + phosphate. Mitochondrial enzyme that catalyzes the dephosphorylation and concomitant reactivation of the alpha subunit of the E1 component of the pyruvate dehydrogenase complex (PDC), thereby stimulating the conversion of pyruvate into acetyl-CoA. Acts as a crucial regulator of T cell metabolism and function, with a particular focus on T-helper Th17. The polypeptide is [Pyruvate dehydrogenase [acetyl-transferring]]-phosphatase 2, mitochondrial (Pdp2) (Mus musculus (Mouse)).